The following is a 457-amino-acid chain: Reticulophagy regulator 3 (457 aa).

Positions 1–24 are disordered; it reads MAQRVGEEEQGASGLRRRRSGARC. 3 helical membrane passes run 80–100, 165–185, and 186–206; these read FFALTSLRIIFLVAFGLMIII, PGKFCLLACSFLTFLAVLGGY, and IPGVVLSYLLLLFLLLWPLAI. Residues 291–305 show a composition bias toward polar residues; the sequence is ENGTFNLSRGQTPLT. 2 disordered regions span residues 291-351 and 410-457; these read ENGT…IPST and AYAE…HSHQ. The segment covering 310 to 326 has biased composition (basic and acidic residues); the sequence is DLDRHSDPEESFARDLP. Over residues 428-441 the composition is skewed to acidic residues; sequence LDTDAEADDFELLD. Positions 435 to 440 match the LIR motif motif; the sequence is DDFELL. Polar residues predominate over residues 443–457; the sequence is SELSQMDPSSSHSHQ.

This sequence belongs to the RETREG family. As to quaternary structure, interacts with ATG8 family modifier proteins.

The protein resides in the endoplasmic reticulum membrane. Functionally, endoplasmic reticulum (ER)-anchored autophagy regulator which exists in an inactive state under basal conditions but is activated following cellular stress. When activated, induces ER fragmentation and mediates ER delivery into lysosomes through sequestration into autophagosomes via interaction with ATG8 family proteins. Promotes ER membrane curvature and ER tubulation required for subsequent ER fragmentation and engulfment into autophagosomes. In Xenopus tropicalis (Western clawed frog), this protein is Reticulophagy regulator 3 (retreg3).